The primary structure comprises 174 residues: MPGRFREDFIDALRSKIGEKSMGVYGVDYPATTDFPTAMAGIYDAGTHVEQTAANCPQSKLVLGGFSQGAAVMGFVTAAAIPDGAPLDAPRPMPPEVADHVAAVTLFGMPSVAFMHSIGAPPIVIGPLYAEKTIQLCAPGDPVCSSGGNWAAHNGYADDGMVEQAAVFAAGRLG.

Ser-67 (nucleophile) is an active-site residue. The cysteines at positions 137 and 144 are disulfide-linked. The active site involves Asp-141. The active-site Proton donor/acceptor is the His-153.

Belongs to the cutinase family.

Does not exhibit cutinase activity. The polypeptide is Probable carboxylesterase Culp5 (Mycobacterium tuberculosis (strain ATCC 25618 / H37Rv)).